We begin with the raw amino-acid sequence, 170 residues long: MLIYSDIITGDEIISDSYDLKEVDGIAYEVDCAMIEEGAVQVDIGANASAEEADEALDDGVVKVNNVVHSFRLQSTQFDKKGYLVYLKGYMKSVKNALKEQGKSDEEIKDFETKASAFAKNVILAKFKDWEFYTGESMNPDGMVVLLNYREDGTTPYVVVWKHGLKETKV.

The TCTP domain maps to 1-170; it reads MLIYSDIITG…WKHGLKETKV (170 aa).

Belongs to the TCTP family.

The protein resides in the cytoplasm. It is found in the cytoskeleton. In terms of biological role, involved in protein synthesis. Involved in microtubule stabilization. The sequence is that of Translationally-controlled tumor protein homolog from Neurospora crassa (strain ATCC 24698 / 74-OR23-1A / CBS 708.71 / DSM 1257 / FGSC 987).